Here is a 1457-residue protein sequence, read N- to C-terminus: Eye-specific diacylglycerol kinase (1457 aa).

Disordered stretches follow at residues methionine 1 to alanine 123, arginine 136 to isoleucine 177, and tyrosine 207 to threonine 339. 3 stretches are compositionally biased toward low complexity: residues serine 22 to threonine 62, serine 98 to serine 115, and aspartate 141 to threonine 154. A compositionally biased stretch (acidic residues) spans alanine 214–glutamate 253. A compositionally biased stretch (basic and acidic residues) spans aspartate 254 to aspartate 266. The span at arginine 294 to threonine 303 shows a compositional bias: basic residues. 2 Phorbol-ester/DAG-type zinc fingers span residues histidine 591–cysteine 641 and histidine 661–cysteine 724. Residues asparagine 758 to alanine 799 form a disordered region. The span at glycine 763 to glycine 778 shows a compositional bias: gly residues. Positions lysine 779–lysine 789 are enriched in basic residues. The DAGKc domain maps to proline 808 to proline 944. The segment at threonine 1264–glutamine 1302 is disordered. ANK repeat units follow at residues glutamine 1320–serine 1349, asparagine 1353–isoleucine 1382, leucine 1389–threonine 1418, and glycine 1422–valine 1451.

The protein belongs to the eukaryotic diacylglycerol kinase family. Expressed specifically in adult eye.

It localises to the membrane. It catalyses the reaction a 1,2-diacyl-sn-glycerol + ATP = a 1,2-diacyl-sn-glycero-3-phosphate + ADP + H(+). Its function is as follows. Required for the maintenance of phospholipid turnover within the photoreceptor. This Drosophila melanogaster (Fruit fly) protein is Eye-specific diacylglycerol kinase (rdgA).